Consider the following 186-residue polypeptide: dCTP deaminase (186 aa).

Residue 107–112 participates in dCTP binding; it reads KSTYAR. Glu133 functions as the Proton donor/acceptor in the catalytic mechanism. Gln152, Tyr166, and Gln176 together coordinate dCTP.

Belongs to the dCTP deaminase family. In terms of assembly, homotrimer.

It catalyses the reaction dCTP + H2O + H(+) = dUTP + NH4(+). The protein operates within pyrimidine metabolism; dUMP biosynthesis; dUMP from dCTP (dUTP route): step 1/2. In terms of biological role, catalyzes the deamination of dCTP to dUTP. The protein is dCTP deaminase of Campylobacter jejuni (strain RM1221).